A 278-amino-acid chain; its full sequence is Probable endonuclease 4 (278 aa).

Positions 69, 109, 145, 179, 182, 214, 227, 229, and 259 each coordinate Zn(2+).

Belongs to the AP endonuclease 2 family. It depends on Zn(2+) as a cofactor.

It carries out the reaction Endonucleolytic cleavage to 5'-phosphooligonucleotide end-products.. In terms of biological role, endonuclease IV plays a role in DNA repair. It cleaves phosphodiester bonds at apurinic or apyrimidinic (AP) sites, generating a 3'-hydroxyl group and a 5'-terminal sugar phosphate. The chain is Probable endonuclease 4 from Phocaeicola vulgatus (strain ATCC 8482 / DSM 1447 / JCM 5826 / CCUG 4940 / NBRC 14291 / NCTC 11154) (Bacteroides vulgatus).